The sequence spans 766 residues: Semaphorin-4E (766 aa).

The first 24 residues, 1-24, serve as a signal peptide directing secretion; sequence MMSLLAVLCVLYVWSPAMLTGGLG. Topologically, residues 25–664 are extracellular; sequence STLDSLPRKT…LHHVKEKERT (640 aa). The Sema domain maps to 27-499; that stretch reads LDSLPRKTVP…SEVGVVQLSI (473 aa). An N-linked (GlcNAc...) asparagine glycan is attached at asparagine 52. 4 disulfides stabilise this stretch: cysteine 100–cysteine 111, cysteine 129–cysteine 138, cysteine 261–cysteine 373, and cysteine 285–cysteine 329. The N-linked (GlcNAc...) asparagine glycan is linked to asparagine 433. Residues 501-552 form the PSI domain; the sequence is ECGRYQTCLDCVLARDPHCGWDLDTEHCATINSIHRTRSSTVIQSLNDGDAS. 2 disulfides stabilise this stretch: cysteine 502–cysteine 519 and cysteine 511–cysteine 528. The Ig-like C2-type domain occupies 555-640; it reads PAIGVSKPVN…QRKYQTQHVA (86 aa). Residues asparagine 564 and asparagine 612 are each glycosylated (N-linked (GlcNAc...) asparagine). Cysteine 577 and cysteine 623 form a disulfide bridge. The helical transmembrane segment at 665-685 threads the bilayer; the sequence is LVAMVVILSLVLAALLIWNLY. The Cytoplasmic segment spans residues 686 to 766; the sequence is KGHLSLPCLH…LKYIDDESEI (81 aa). Positions 724–750 are disordered; that stretch reads FNSNNNHANDQRYSSSRETDRLSTTAG.

Belongs to the semaphorin family.

It localises to the membrane. The chain is Semaphorin-4E (sema4e) from Danio rerio (Zebrafish).